The following is a 61-amino-acid chain: Small ribosomal subunit protein uS14 (61 aa).

Positions 24, 27, 40, and 43 each coordinate Zn(2+).

The protein belongs to the universal ribosomal protein uS14 family. Zinc-binding uS14 subfamily. As to quaternary structure, part of the 30S ribosomal subunit. Contacts proteins S3 and S10. Zn(2+) is required as a cofactor.

In terms of biological role, binds 16S rRNA, required for the assembly of 30S particles and may also be responsible for determining the conformation of the 16S rRNA at the A site. The sequence is that of Small ribosomal subunit protein uS14 from Mycobacterium sp. (strain JLS).